The primary structure comprises 587 residues: 2-succinyl-5-enolpyruvyl-6-hydroxy-3-cyclohexene-1-carboxylate synthase (587 aa).

It belongs to the TPP enzyme family. MenD subfamily. In terms of assembly, homodimer. Mg(2+) serves as cofactor. It depends on Mn(2+) as a cofactor. The cofactor is thiamine diphosphate.

It carries out the reaction isochorismate + 2-oxoglutarate + H(+) = 5-enolpyruvoyl-6-hydroxy-2-succinyl-cyclohex-3-ene-1-carboxylate + CO2. The protein operates within quinol/quinone metabolism; 1,4-dihydroxy-2-naphthoate biosynthesis; 1,4-dihydroxy-2-naphthoate from chorismate: step 2/7. It functions in the pathway cofactor biosynthesis; phylloquinone biosynthesis. Catalyzes the thiamine diphosphate-dependent decarboxylation of 2-oxoglutarate and the subsequent addition of the resulting succinic semialdehyde-thiamine pyrophosphate anion to isochorismate to yield 2-succinyl-5-enolpyruvyl-6-hydroxy-3-cyclohexene-1-carboxylate (SEPHCHC). The chain is 2-succinyl-5-enolpyruvyl-6-hydroxy-3-cyclohexene-1-carboxylate synthase from Prochlorococcus marinus (strain AS9601).